We begin with the raw amino-acid sequence, 363 residues long: tRNA/tmRNA (uracil-C(5))-methyltransferase (363 aa).

Residues Gln187, Tyr215, Asn220, Glu236, and Asp296 each coordinate S-adenosyl-L-methionine. The active-site Nucleophile is Cys321. The Proton acceptor role is filled by Glu355.

Belongs to the class I-like SAM-binding methyltransferase superfamily. RNA M5U methyltransferase family. TrmA subfamily.

It catalyses the reaction uridine(54) in tRNA + S-adenosyl-L-methionine = 5-methyluridine(54) in tRNA + S-adenosyl-L-homocysteine + H(+). The enzyme catalyses uridine(341) in tmRNA + S-adenosyl-L-methionine = 5-methyluridine(341) in tmRNA + S-adenosyl-L-homocysteine + H(+). In terms of biological role, dual-specificity methyltransferase that catalyzes the formation of 5-methyluridine at position 54 (m5U54) in all tRNAs, and that of position 341 (m5U341) in tmRNA (transfer-mRNA). This is tRNA/tmRNA (uracil-C(5))-methyltransferase from Pseudomonas paraeruginosa (strain DSM 24068 / PA7) (Pseudomonas aeruginosa (strain PA7)).